The following is a 1163-amino-acid chain: RLVEVVQHIVVRRTDCGTIRGISVNTRNGMMPEIILIQTLIGRVVAENIYIGSRCIVVRNQDIGIGLINRFITFQTQPIFIRTPFTCRNTSWICRLCYGRSPIHGDLVELGEAVGIIAGQSIGEPGTQLTLRTFHTGGVFTGGTAEYVRAPSNGKIKLNEDLVHPTRTRHGYPAFICNIDLYVTIESDDIIHNVIIPPKSFLLVQNDQYVKSEQVIAEIRAGTYTFNLKERVRKHIYSDSEGEMHWSTDVYHASEFMYSNVHILPKTSHLWILSGKSCRSNTIHFLLRKDQDQITMDSLSNGKTNISNLLERNDQVKHKLFRFNTFGTKEKGISDYSIFNEIICTDHSYPAIFHDTFYFLAKRRRNRFLIPFPFQSIQERKNERMSPSGVSIEIPINGIFHRNSIFAYFDDPQYRRHSSGITKYRTIGIHSIFQKEDFIEYRGIKELKPKSQIQVDRFFFIPEEVHILPKSSSLMVRNNSLVGIGTPITFNIRSRVGGLVRLDKKKKKIELKIFSGNIHFPGEMDKISRHSAILIPPGTVKKKKCNKSKKIKNWIYVQWIATTKKKYFVLVRPVILYEIPDSNNFVKLFPQDLFQEKDNLELKVVNYILYGNGKSIRGISDTRIQLVRTCLVFNWDDGKNSSSIEEAPASFIEVRTNGLIEYFLRIDLVKSNTSYIRKRNEPSGFGLIGDNKSDRINPFFSIHSKGKIQQSLSQNHGTIRMLLNRNKECRSWIILSSSNCFQMRPFNNEKSHNGIKKDPIISINNNGPLGIALQVANFYSLYHLITHNQISIIKNLQLDKLTEIFQVIKYYLMDENDKICKPDLYSNIILNPFHLNWFFLHHFYCEKTFTRISLGQFICENICIAQMKNRPHLKLKSGQVIIVQMDSVIIRSANPYLATPGATIHGHYGEILSQGDILVTFIYEKSRSGDITQGLPKVEQILEIRSIDSISMNLEKRIDAWNECITKIIGIPWGFLIGAELTIAQSRISLVNKIQKVYRSQGVHIHNRHIEIIVRQITSKVLVSEDGMSNIFLPGELIGLLRAERTGRALEEAICYRALLLGVTKTSLNTQSFISEASFQETARVLAKAALRGRIDWLKGLKENVVLGGMIPVGTGFKRIMHRSRSRQHNKITRKKKLFEVEIRNLLFHHRKLLDFANFKEFM.

The Zn(2+) site is built by cysteine 16, cysteine 87, cysteine 94, and cysteine 97.

Belongs to the RNA polymerase beta' chain family. RpoC2 subfamily. In terms of assembly, in plastids the minimal PEP RNA polymerase catalytic core is composed of four subunits: alpha, beta, beta', and beta''. When a (nuclear-encoded) sigma factor is associated with the core the holoenzyme is formed, which can initiate transcription. Requires Zn(2+) as cofactor.

The protein resides in the plastid. It localises to the chloroplast. It catalyses the reaction RNA(n) + a ribonucleoside 5'-triphosphate = RNA(n+1) + diphosphate. Functionally, DNA-dependent RNA polymerase catalyzes the transcription of DNA into RNA using the four ribonucleoside triphosphates as substrates. In Pisum sativum (Garden pea), this protein is DNA-directed RNA polymerase subunit beta'' (rpoC2).